Reading from the N-terminus, the 429-residue chain is C4-dicarboxylate transport protein (429 aa).

8 consecutive transmembrane segments (helical) span residues 3-23 (LTIF…GVLL), 44-64 (LIKM…IAGM), 76-96 (IALL…LLIV), 142-162 (IGAF…LFGF), 184-204 (VIFG…FGAM), 222-242 (LIAC…GSIA), 326-346 (VIHQ…AAGV), and 352-372 (IVLA…LALI).

Belongs to the dicarboxylate/amino acid:cation symporter (DAACS) (TC 2.A.23) family.

The protein localises to the cell inner membrane. Responsible for the transport of dicarboxylates such as succinate, fumarate, and malate from the periplasm across the membrane. This is C4-dicarboxylate transport protein from Serratia proteamaculans (strain 568).